The following is a 387-amino-acid chain: Probable 1-alkyl-2-acetylglycerophosphocholine esterase (387 aa).

The first 17 residues, 1-17 (MLVQGTIICALVANAIA), serve as a signal peptide directing secretion. N51 and N141 each carry an N-linked (GlcNAc...) asparagine glycan. S227 (nucleophile) is an active-site residue. D250 functions as the Charge relay system in the catalytic mechanism. Residue N283 is glycosylated (N-linked (GlcNAc...) asparagine). Residue H313 is the Charge relay system of the active site.

Belongs to the AB hydrolase superfamily. Lipase family.

The protein localises to the secreted. The enzyme catalyses a 1-O-alkyl-2-acetyl-sn-glycero-3-phosphocholine + H2O = a 1-O-alkyl-sn-glycero-3-phosphocholine + acetate + H(+). The polypeptide is Probable 1-alkyl-2-acetylglycerophosphocholine esterase (Arthroderma benhamiae (strain ATCC MYA-4681 / CBS 112371) (Trichophyton mentagrophytes)).